We begin with the raw amino-acid sequence, 156 residues long: MAALIDTGIFFGFYSLKDVHHMDSVAIVVHAVEGKWGRLFVTNHILDETLTLLKYKKLPADKFLEGFVESGVLNIIYTDDEVERKALEVFKARVYEKGFSYTDAISEVVAEELKLKLISYDSRFSLPTIGRDYWKSLDESERKRISAILREKGIDG.

In terms of domain architecture, PINc spans 4–125; it reads LIDTGIFFGF…KLISYDSRFS (122 aa). Mg(2+) is bound by residues Asp-6 and Asp-103.

The protein belongs to the PINc/VapC protein family. Requires Mg(2+) as cofactor.

Toxic component of a type II toxin-antitoxin (TA) system. An RNase. In Archaeoglobus fulgidus (strain ATCC 49558 / DSM 4304 / JCM 9628 / NBRC 100126 / VC-16), this protein is VapC ribonuclease AF_1683.